The following is a 162-amino-acid chain: Transcription elongation factor GreA (162 aa).

Positions 46 to 77 form a coiled coil; that stretch reads RENAEYKAAREEQTRLNNMVTRLQEEIERAQV.

Belongs to the GreA/GreB family.

Necessary for efficient RNA polymerase transcription elongation past template-encoded arresting sites. The arresting sites in DNA have the property of trapping a certain fraction of elongating RNA polymerases that pass through, resulting in locked ternary complexes. Cleavage of the nascent transcript by cleavage factors such as GreA or GreB allows the resumption of elongation from the new 3'terminus. GreA releases sequences of 2 to 3 nucleotides. This chain is Transcription elongation factor GreA, found in Treponema pallidum (strain Nichols).